The following is a 546-amino-acid chain: MTAQQHLSRRRMLGMAAFGAAALAGGTTIAAPRAAAAAKSAADNGGYVPAVVIGTGYGAAVSALRLGEAGVQTLMLEMGQLWNQPGPDGNIFCGMLNPDKRSSWFKNRTEAPLGSFLWLDVVNRNIDPYAGVLDRVNYDQMSVYVGRGVGGGSLVNGGMAVEPKRSYFEEILPRVDSSEMYDRYFPRANSMLRVNHIDTKWFEDTEWYKFARVSREQAGKAGLGTVFVPNVYDFGYMQREAAGEVPKSALATEVIYGNNHGKQSLDKTYLAAALGTGKVTIQTLHQVKTIRQTKDGGYALTVEQKDTDGKLLATKEISCRYLFLGAGSLGSTELLVRARDTGTLPNLNSEVGAGWGPNGNIMTARANHMWNPTGAHQSSIPALGIDAWDNSDSSVFAEIAPMPAGLETWVSLYLAITKNPQRGTFVYDAATDRAKLNWTRDQNAPAVNAAKALFDRINKANGTIYRYDLFGTQLKAFADDFCYHPLGGCVLGKATDDYGRVAGYKNLYVTDGSLIPGSVGVNPFVTITALAERNVERIIKQDVTAS.

Residues 1 to 42 (MTAQQHLSRRRMLGMAAFGAAALAGGTTIAAPRAAAAAKSAA) constitute a signal peptide (tat-type signal). FAD contacts are provided by Tyr-57, Gly-58, Glu-77, Gly-152, Asn-156, Gly-157, Met-159, and Val-287. Active-site proton acceptor residues include Glu-398 and His-484. 2 residues coordinate FAD: Gly-512 and Phe-524.

It belongs to the GMC oxidoreductase family. Monomer. FAD is required as a cofactor. In terms of processing, predicted to be exported by the Tat system. The position of the signal peptide cleavage has been experimentally proven.

The protein localises to the secreted. It carries out the reaction cholesterol + O2 = cholest-5-en-3-one + H2O2. It catalyses the reaction cholest-5-en-3-one = cholest-4-en-3-one. It participates in steroid metabolism; cholesterol degradation. Functionally, bifunctional enzyme that catalyzes the oxidation and isomerization of cholesterol to cholestenone (cholest-4-en-3-one), an initial step in the cholesterol degradation process. The cholesterol degradation pathway allows the bacterium to utilize cholesterol as its sole source of carbon and energy. This chain is Cholesterol oxidase, found in Streptomyces sp. (strain SA-COO).